A 48-amino-acid polypeptide reads, in one-letter code: Thiamine thiazole synthase, chloroplastic (48 aa).

Substrate-binding residues include Ala-18 and Val-40.

This sequence belongs to the THI4 family. Homooctamer. It depends on Fe cation as a cofactor.

The protein localises to the plastid. It localises to the chloroplast. It carries out the reaction [ADP-thiazole synthase]-L-cysteine + glycine + NAD(+) = [ADP-thiazole synthase]-dehydroalanine + ADP-5-ethyl-4-methylthiazole-2-carboxylate + nicotinamide + 3 H2O + 2 H(+). Functionally, involved in biosynthesis of the thiamine precursor thiazole. Catalyzes the conversion of NAD and glycine to adenosine diphosphate 5-(2-hydroxyethyl)-4-methylthiazole-2-carboxylic acid (ADT), an adenylated thiazole intermediate. The reaction includes an iron-dependent sulfide transfer from a conserved cysteine residue of the protein to a thiazole intermediate. The enzyme can only undergo a single turnover, which suggests it is a suicide enzyme. May have additional roles in adaptation to various stress conditions and in DNA damage tolerance. The protein is Thiamine thiazole synthase, chloroplastic (THI1) of Populus euphratica (Euphrates poplar).